The primary structure comprises 341 residues: Serine/threonine-protein kinase PDIK1L (341 aa).

A Protein kinase domain is found at 8–334 (YDLIREVGRG…LELRLVQIAF (327 aa)). ATP contacts are provided by residues 14-22 (VGRGSYGVV) and Lys37. Asp164 functions as the Proton acceptor in the catalytic mechanism.

The protein belongs to the protein kinase superfamily. Ser/Thr protein kinase family. As to expression, expressed in liver, kidney, pancreas, spleen, thymus and prostate.

Its subcellular location is the nucleus. The enzyme catalyses L-seryl-[protein] + ATP = O-phospho-L-seryl-[protein] + ADP + H(+). The catalysed reaction is L-threonyl-[protein] + ATP = O-phospho-L-threonyl-[protein] + ADP + H(+). This Homo sapiens (Human) protein is Serine/threonine-protein kinase PDIK1L (PDIK1L).